The following is a 446-amino-acid chain: Exodeoxyribonuclease 7 large subunit (446 aa).

This sequence belongs to the XseA family. Heterooligomer composed of large and small subunits.

The protein localises to the cytoplasm. It carries out the reaction Exonucleolytic cleavage in either 5'- to 3'- or 3'- to 5'-direction to yield nucleoside 5'-phosphates.. Bidirectionally degrades single-stranded DNA into large acid-insoluble oligonucleotides, which are then degraded further into small acid-soluble oligonucleotides. The chain is Exodeoxyribonuclease 7 large subunit from Streptococcus thermophilus (strain ATCC BAA-250 / LMG 18311).